The primary structure comprises 251 residues: WUSCHEL-related homeobox 4 (251 aa).

Disordered stretches follow at residues 1–21 (MKVHEFSNGFSSSWDQHDSTS) and 33–93 (LAPK…RWNP). Over residues 11 to 21 (SSSWDQHDSTS) the composition is skewed to low complexity. The span at 71–83 (KFEHKRDPPHQLE) shows a compositional bias: basic and acidic residues. The homeobox; WUS-type DNA-binding region spans 86-150 (PGGTRWNPTQ…NHKARERQKQ (65 aa)).

It belongs to the WUS homeobox family. In terms of tissue distribution, expressed in the vasculature of the whole plant (roots, hypocotyls, cotyledons and leaves), trichomes and stomata. Expresse in the developing vascular bundles of root and shoot lateral organs.

It localises to the nucleus. In terms of biological role, promotes differentiation and/or maintenance of the vascular procambium, the initial cells of the developing vasculature. Part of the TDIF-TDR-WOX4 signaling pathway that plays a crucial role in the maintenance of the vascular meristem organization during secondary growth. Is required for promoting the proliferation of procambial/cambial stem cells but not for repressing their commitment to xylem differentiation in response to the TDIF signal. Acts redundantly with WOX14 downstream of the TDR/PXY receptor kinase to regulate procambial cell proliferation and differentiation in vascular tissue, independently of any role in vascular. Acts as a cambium regulator in the inflorescence stem. Is required for auxin-dependent cambium stimulation in the inflorescence stem. The chain is WUSCHEL-related homeobox 4 (WOX4) from Arabidopsis thaliana (Mouse-ear cress).